The sequence spans 128 residues: Probable 4-amino-4-deoxy-L-arabinose-phosphoundecaprenol flippase subunit ArnF (128 aa).

Over methionine 1–glycine 2 the chain is Cytoplasmic. A helical transmembrane segment spans residues leucine 3–alanine 23. At alanine 24–aspartate 35 the chain is on the periplasmic side. A helical membrane pass occupies residues phenylalanine 36–glycine 56. At tyrosine 57–alanine 76 the chain is on the cytoplasmic side. The chain crosses the membrane as a helical span at residues tyrosine 77–tryptophan 97. Residues glutamate 98–threonine 100 are Periplasmic-facing. A helical membrane pass occupies residues phenylalanine 101–leucine 121. Over proline 122–tyrosine 128 the chain is Cytoplasmic.

It belongs to the ArnF family. As to quaternary structure, heterodimer of ArnE and ArnF.

Its subcellular location is the cell inner membrane. The protein operates within bacterial outer membrane biogenesis; lipopolysaccharide biosynthesis. Its function is as follows. Translocates 4-amino-4-deoxy-L-arabinose-phosphoundecaprenol (alpha-L-Ara4N-phosphoundecaprenol) from the cytoplasmic to the periplasmic side of the inner membrane. The protein is Probable 4-amino-4-deoxy-L-arabinose-phosphoundecaprenol flippase subunit ArnF of Shigella sonnei (strain Ss046).